We begin with the raw amino-acid sequence, 748 residues long: Structure-specific endonuclease subunit SLX4 (748 aa).

The interval 50 to 102 is disordered; the sequence is LSSDDDSISTQVKSVTAQKSPITQETTKNDTERNKDVDKSCNPVSTSQPDLGE. Residues 57–75 are compositionally biased toward polar residues; the sequence is ISTQVKSVTAQKSPITQET. Phosphothreonine; by ATR and ATM is present on Thr-72. A compositionally biased stretch (basic and acidic residues) spans 76 to 88; sequence TKNDTERNKDVDK. Thr-113 carries the phosphothreonine; by ATR and ATM modification. Disordered regions lie at residues 215–236 and 277–303; these read IKTQ…KGEK and EKSS…PPEL. Residues 222–236 show a composition bias toward basic and acidic residues; sequence NSDKPPRARNNKGEK. Low complexity predominate over residues 277–291; the sequence is EKSSSSLDNQESSQQ. Position 289 is a phosphoserine; by ATR and ATM (Ser-289). Thr-319 carries the post-translational modification Phosphothreonine; by ATR and ATM. Ser-329 and Ser-355 each carry phosphoserine; by ATR and ATM.

It belongs to the SLX4 family. In terms of assembly, forms a heterodimer with SLX1. Interacts with RAD1; catalytic subunit of the RAD1-RAD10 endonuclease. Interacts with RTT107. Post-translationally, phosphorylated by ATR (MEC1) and ATM (TEL1) upon DNA damage. This appears to be required for the function with the RAD1-RAD10 endonuclease.

It is found in the nucleus. The protein resides in the cytoplasm. In terms of biological role, regulatory subunit that interacts with and increases the activity of different structure-specific endonucleases. Has several distinct roles in protecting genome stability by resolving diverse forms of deleterious DNA structures. Component of the SLX1-SLX4 structure-specific endonuclease that resolves DNA secondary structures generated during DNA repair and recombination. Has endonuclease activity towards branched DNA substrates, introducing single-strand cuts in duplex DNA close to junctions with ss-DNA. Has a preference for simple Y, 5'-flap and replication fork-like structures. It cleaves the strand bearing the 5'-non-homologous arm at the branch site junction and generates ligatable, nicked products from the 5'-flap or replication fork substrates. Plays a critical role in maintaining the integrity of the ribosomal DNA (rDNA) loci, where it has a role in re-starting stalled replication forks. Has Holliday junction resolvase activity in vitro. Interacts with the structure-specific RAD1-RAD10 endonuclease and promotes RAD1-RAD10-dependent 3'-non-homologous tail removal (NHTR) during repair of double-strand breaks by single-strand annealing. SLX4 also promotes recovery from DNA-alkylation-induced replisome stalling during DNA replication by facilitating the error-free mode of lesion bypass. This does not require SLX1 or RAD1-RAD10, but probably RTT107. The protein is Structure-specific endonuclease subunit SLX4 of Saccharomyces cerevisiae (strain YJM789) (Baker's yeast).